The primary structure comprises 518 residues: Membrane-bound lytic murein transglycosylase F (518 aa).

The N-terminal stretch at 1 to 21 (MKKLKINYLFIGILALLLAVA) is a signal peptide. A non-LT domain region spans residues 22 to 269 (LWPSIPWFGK…RIEEKYLGHG (248 aa)). The tract at residues 270 to 518 (DDFDYVDTRT…SRKGSEEKQN (249 aa)) is LT domain. Glutamate 314 is a catalytic residue.

It in the N-terminal section; belongs to the bacterial solute-binding protein 3 family. In the C-terminal section; belongs to the transglycosylase Slt family.

The protein resides in the cell outer membrane. The enzyme catalyses Exolytic cleavage of the (1-&gt;4)-beta-glycosidic linkage between N-acetylmuramic acid (MurNAc) and N-acetylglucosamine (GlcNAc) residues in peptidoglycan, from either the reducing or the non-reducing ends of the peptidoglycan chains, with concomitant formation of a 1,6-anhydrobond in the MurNAc residue.. In terms of biological role, murein-degrading enzyme that degrades murein glycan strands and insoluble, high-molecular weight murein sacculi, with the concomitant formation of a 1,6-anhydromuramoyl product. Lytic transglycosylases (LTs) play an integral role in the metabolism of the peptidoglycan (PG) sacculus. Their lytic action creates space within the PG sacculus to allow for its expansion as well as for the insertion of various structures such as secretion systems and flagella. The polypeptide is Membrane-bound lytic murein transglycosylase F (Escherichia coli (strain ATCC 8739 / DSM 1576 / NBRC 3972 / NCIMB 8545 / WDCM 00012 / Crooks)).